We begin with the raw amino-acid sequence, 104 residues long: N(4)-acetylcytidine amidohydrolase (104 aa).

Positions 6-102 (ITFYQRFEAD…SEFWVIEIRL (97 aa)) constitute an ASCH domain. Catalysis depends on Lys-21, which acts as the Proton acceptor. The active-site Nucleophile is Thr-24. Glu-74 acts as the Proton donor in catalysis.

This sequence belongs to the N(4)-acetylcytidine amidohydrolase family.

It catalyses the reaction N(4)-acetylcytidine + H2O = cytidine + acetate + H(+). The enzyme catalyses N(4)-acetyl-2'-deoxycytidine + H2O = 2'-deoxycytidine + acetate + H(+). The catalysed reaction is N(4)-acetylcytosine + H2O = cytosine + acetate + H(+). In terms of biological role, catalyzes the hydrolysis of N(4)-acetylcytidine (ac4C). In Haemophilus influenzae (strain PittEE), this protein is N(4)-acetylcytidine amidohydrolase.